The primary structure comprises 301 residues: Glutamyl-Q tRNA(Asp) synthetase (301 aa).

L-glutamate-binding positions include 8 to 12 and glutamate 44; that span reads RFAPS. The 'HIGH' region motif lies at 11–21; it reads PSPTGPLHFGS. Zn(2+) contacts are provided by cysteine 100, cysteine 102, tyrosine 122, and cysteine 126. The L-glutamate site is built by tyrosine 180 and arginine 198. Positions 236 to 240 match the 'KMSKS' region motif; the sequence is KLSKQ. ATP is bound at residue lysine 239.

This sequence belongs to the class-I aminoacyl-tRNA synthetase family. GluQ subfamily. It depends on Zn(2+) as a cofactor.

Catalyzes the tRNA-independent activation of glutamate in presence of ATP and the subsequent transfer of glutamate onto a tRNA(Asp). Glutamate is transferred on the 2-amino-5-(4,5-dihydroxy-2-cyclopenten-1-yl) moiety of the queuosine in the wobble position of the QUC anticodon. The protein is Glutamyl-Q tRNA(Asp) synthetase of Dechloromonas aromatica (strain RCB).